The sequence spans 1374 residues: Alpha,alpha-trehalose-phosphate synthase [UDP-forming] 1 (1374 aa).

Disordered stretches follow at residues 28–66 (DTGK…SDKD), 86–117 (YTPG…DDEG), and 1352–1374 (KADS…SKQQ). Basic and acidic residues-rich tracts occupy residues 56–66 (DPFDRPKSDKD) and 86–95 (YTPGKEKGVD). Acidic residues-rich tracts occupy residues 96-109 (QDES…EDHD) and 1356-1368 (YYDD…DQED).

It in the N-terminal section; belongs to the glycosyltransferase 20 family. This sequence in the C-terminal section; belongs to the gob-1 trehalose phosphatase family.

It carries out the reaction D-glucose 6-phosphate + UDP-alpha-D-glucose = alpha,alpha-trehalose 6-phosphate + UDP + H(+). In terms of biological role, catalyzes the production of trehalose from glucose-6-phosphate and UDP-alpha-D-glucose in a 2 step process. This chain is Alpha,alpha-trehalose-phosphate synthase [UDP-forming] 1 (tps-1), found in Caenorhabditis briggsae.